The following is a 188-amino-acid chain: Elongation factor P (188 aa).

This sequence belongs to the elongation factor P family.

It is found in the cytoplasm. Its pathway is protein biosynthesis; polypeptide chain elongation. Involved in peptide bond synthesis. Stimulates efficient translation and peptide-bond synthesis on native or reconstituted 70S ribosomes in vitro. Probably functions indirectly by altering the affinity of the ribosome for aminoacyl-tRNA, thus increasing their reactivity as acceptors for peptidyl transferase. The chain is Elongation factor P from Rhodopseudomonas palustris (strain TIE-1).